The sequence spans 341 residues: Processive diacylglycerol beta-glycosyltransferase (341 aa).

This sequence belongs to the glycosyltransferase 2 family. Mg(2+) is required as a cofactor.

The protein resides in the cell membrane. It catalyses the reaction a 1,2-diacyl-sn-glycerol + UDP-alpha-D-glucose = a 1,2-diacyl-3-O-(beta-D-glucopyranosyl)-sn-glycerol + UDP + H(+). The enzyme catalyses a 1,2-diacyl-sn-glycerol + UDP-alpha-D-galactose = a 1,2-diacyl-3-O-(beta-D-galactosyl)-sn-glycerol + UDP + H(+). It carries out the reaction a 1,2-diacyl-3-O-(beta-D-glucopyranosyl)-sn-glycerol + UDP-alpha-D-glucose = a 1,2-diacyl-3-O-(beta-D-Glc-(1-&gt;6)-beta-D-Glc)-sn-glycerol + UDP + H(+). The catalysed reaction is a 1,2-diacyl-3-O-(beta-D-galactosyl)-sn-glycerol + UDP-alpha-D-galactose = a 1,2-diacyl-3-O-[beta-D-galactosyl-(1-&gt;6)-beta-D-galactosyl]-sn-glycerol + UDP + H(+). It functions in the pathway glycolipid metabolism; diglucosyl-diacylglycerol biosynthesis. Activated by the negatively charged lipid dioleoylphosphatidylglycerol (DOPG) and inhibited by N-(n-nonyl)deoxygalactonojirimycin (C9J). Functionally, processive glycosyltransferase involved in the biosynthesis of both the non-bilayer-prone beta-monoglycosyldiacylglycerol and the bilayer-forming membrane lipid beta-diglycosyldiacylglycerol. These components contribute to regulate the properties and stability of the membrane. Catalyzes sequentially the transfers of glucosyl or galactosyl residues from UDP-Glc or UDP-Gal to diacylglycerol (DAG) acceptor to form the corresponding beta-glycosyl-DAG (3-O-(beta-D-glycopyranosyl)-1,2-diacyl-sn-glycerol), which then acts as acceptor to give beta-diglycosyl-DAG product (3-O-(beta-D-glycopyranosyl-beta-(1-&gt;6)-D-glycopyranosyl)-1,2-diacyl-sn-glycerol). Dioleoylglycerol (DOG) is a preferred sugar acceptor than 3-O-(beta-D-glucopyranosyl)-1,2-dioleoyl-sn-glycerol. The polypeptide is Processive diacylglycerol beta-glycosyltransferase (Mycoplasma genitalium (strain ATCC 33530 / DSM 19775 / NCTC 10195 / G37) (Mycoplasmoides genitalium)).